We begin with the raw amino-acid sequence, 685 residues long: Sulfite reductase [ferredoxin], chloroplastic (685 aa).

A chloroplast-targeting transit peptide spans 1-51; that stretch reads MTTSFAAAALRDPKLQIPNYHGLRSSSAASSLSRNALSVPSSTRSSSLIRA. [4Fe-4S] cluster-binding residues include cysteine 495, cysteine 501, cysteine 541, and cysteine 545. Cysteine 545 contributes to the siroheme binding site.

The protein belongs to the nitrite and sulfite reductase 4Fe-4S domain family. As to quaternary structure, monomer. Interacts with ferredoxin. Siroheme is required as a cofactor. Requires [4Fe-4S] cluster as cofactor. In terms of processing, phosphorylated; this phosphorylation reduces DNA-binding. Expressed in leaves, stems, and roots.

Its subcellular location is the plastid. The protein localises to the chloroplast stroma. The protein resides in the chloroplast nucleoid. It is found in the plastid stroma. It carries out the reaction hydrogen sulfide + 6 oxidized [2Fe-2S]-[ferredoxin] + 3 H2O = sulfite + 6 reduced [2Fe-2S]-[ferredoxin] + 7 H(+). In terms of biological role, essential protein with sulfite reductase activity required in assimilatory sulfate reduction pathway during both primary and secondary metabolism and thus involved in development and growth. DNA-binding protein that binds to both double-stranded and single-stranded DNA without significant sequence specificity to reversibly repress the transcriptional activity of chloroplast nucleoids by promoting DNA compaction and possibly regulate DNA replication. In Pisum sativum (Garden pea), this protein is Sulfite reductase [ferredoxin], chloroplastic (SIR).